A 222-amino-acid chain; its full sequence is Abasic site processing protein YedK (222 aa).

The Nucleophile role is filled by Cys2. Cys2 carries the thiazolidine linkage to a ring-opened DNA abasic site modification. The active site involves Glu105.

The protein belongs to the SOS response-associated peptidase family.

Formation and reversal of DNA-protein cross-link depends on DNA context. Catalyzes formation of the thiazolidine linkage in presence of abasic sites in single-stranded DNA. Mediates the reversal of the thiazolidine cross-link in presence of double stranded DNA. Functionally, sensor of abasic sites in single-stranded DNA (ssDNA) required to preserve genome integrity by promoting error-free repair of abasic sites. Recognizes and binds abasic sites in ssDNA at replication forks and chemically modifies the lesion by forming a covalent cross-link with DNA: forms a stable thiazolidine linkage between a ring-opened abasic site and the alpha-amino and sulfhydryl substituents of its N-terminal catalytic cysteine residue. The DNA-protein cross-link is then reversed: able to catalyze the reversal of the thiazolidine cross-link and cycle between a cross-link and a non-cross-linked state depending on DNA context: mediates self-reversal of the thiazolidine cross-link in double stranded DNA. May act as a protease: mediates autocatalytic processing of its N-terminal methionine in order to expose the catalytic cysteine. The protein is Abasic site processing protein YedK of Escherichia coli (strain K12).